Consider the following 264-residue polypeptide: Phosphatidylglycerol--prolipoprotein diacylglyceryl transferase (264 aa).

A run of 7 helical transmembrane segments spans residues 14-34, 60-80, 98-118, 128-148, 176-196, 203-223, and 240-260; these read IIFSIGPIALRWYGLMYLIGF, LIYTCFWGVILGGRIGDVFFY, GGMSFHGGLIGVIVAMIWVSF, ADFIAPLIPFGLGMGRIGNFI, SQLYEFFLEGVVLFFILNWFI, GSVAGLFLIGYGVFRFLVEYV, and GQLLSLPMIIGGLAIMIWAYS. Arg143 is an a 1,2-diacyl-sn-glycero-3-phospho-(1'-sn-glycerol) binding site.

It belongs to the Lgt family.

It localises to the cell inner membrane. The enzyme catalyses L-cysteinyl-[prolipoprotein] + a 1,2-diacyl-sn-glycero-3-phospho-(1'-sn-glycerol) = an S-1,2-diacyl-sn-glyceryl-L-cysteinyl-[prolipoprotein] + sn-glycerol 1-phosphate + H(+). Its pathway is protein modification; lipoprotein biosynthesis (diacylglyceryl transfer). Catalyzes the transfer of the diacylglyceryl group from phosphatidylglycerol to the sulfhydryl group of the N-terminal cysteine of a prolipoprotein, the first step in the formation of mature lipoproteins. The sequence is that of Phosphatidylglycerol--prolipoprotein diacylglyceryl transferase from Actinobacillus pleuropneumoniae serotype 7 (strain AP76).